The primary structure comprises 306 residues: Tyrosine recombinase XerC (306 aa).

Residues 6–92 (NTLYLQTKPY…ALRQWFSYLI (87 aa)) form the Core-binding (CB) domain. The region spanning 113 to 292 (RLPKNIDAEQ…DFQHLAKIYD (180 aa)) is the Tyr recombinase domain. Catalysis depends on residues Arg152, Lys176, His244, Arg247, and His270. The O-(3'-phospho-DNA)-tyrosine intermediate role is filled by Tyr279.

This sequence belongs to the 'phage' integrase family. XerC subfamily. Forms a cyclic heterotetrameric complex composed of two molecules of XerC and two molecules of XerD.

The protein resides in the cytoplasm. In terms of biological role, site-specific tyrosine recombinase, which acts by catalyzing the cutting and rejoining of the recombining DNA molecules. The XerC-XerD complex is essential to convert dimers of the bacterial chromosome into monomers to permit their segregation at cell division. It also contributes to the segregational stability of plasmids. The protein is Tyrosine recombinase XerC of Actinobacillus pleuropneumoniae serotype 7 (strain AP76).